Consider the following 193-residue polypeptide: MSQTDIHVANAASMSQDDARYLISLIRTVPDFPREGILFRDFMPVFADSRGLRILLDALIAALPVHTDEFDAVAGLEARGFLFGPALAAQLGKGFIAIRKAGKLPPPVHACSYALEYGKATLEIEDTSVRNNERILIVDDLIATGGSAAAAKDLIESAGGKVAGYEFVMELEGLDGRTALGDYPYGSLLKMPA.

This sequence belongs to the purine/pyrimidine phosphoribosyltransferase family. In terms of assembly, homodimer.

It localises to the cytoplasm. The catalysed reaction is AMP + diphosphate = 5-phospho-alpha-D-ribose 1-diphosphate + adenine. It participates in purine metabolism; AMP biosynthesis via salvage pathway; AMP from adenine: step 1/1. Catalyzes a salvage reaction resulting in the formation of AMP, that is energically less costly than de novo synthesis. The protein is Adenine phosphoribosyltransferase of Bifidobacterium animalis subsp. lactis (strain AD011).